Reading from the N-terminus, the 511-residue chain is MVLLAAAVCTKAGKAIVSRQFVEMTRTRIEGLLAAFPKLMNTGKQHTFVETESVRYVYQPMEKLYMVLITTKNSNILEDLETLRLFSRVIPEYCRALEENEISEHCFDLIFAFDEIVALGYRENVNLAQIRTFTEMDSHEEKVFRAVRETQEREAKAEMRRKAKELQQARRDAERQGKKAPGFGGFGSSAVSGGSTAAMITETIIETDKPKVAPAPARPSGPSKALKLGAKGKEVDNFVDKLKSEGETIMSSSMGKRTSEASKMHAPPINMESVHMKIEEKITLTCGRDGGLQNMELHGMIMLRISDDKYGRIRLHVENEDKKGVQLQTHPNVDKKLFTAESLIGLKNPEKSFPVNSDVGVLKWRLQTTEESFIPLTINCWPSESGNGCDVNIEYELQEDNLELNDVVITIPLPSGVGAPVIGEIDGEYRHDSRRNTLEWCLPVIDAKNKSGSLEFSIAGQPNDFFPVQVSFVSKKNYCNIQVTKVTQVDGNSPVRFSTETTFLVDKYEIL.

Residues 167-177 (QQARRDAERQG) show a composition bias toward basic and acidic residues. The tract at residues 167–188 (QQARRDAERQGKKAPGFGGFGS) is disordered. Residue S223 is modified to Phosphoserine. 2 positions are modified to N6-acetyllysine: K233 and K241. S244 carries the post-translational modification Phosphoserine. The MHD domain occupies 271 to 511 (MESVHMKIEE…TFLVDKYEIL (241 aa)). N6-acetyllysine is present on residues K309 and K351. A Phosphoserine modification is found at S493.

It belongs to the adaptor complexes medium subunit family. Delta-COP subfamily. In terms of assembly, oligomeric complex that consists of at least the alpha, beta, beta', gamma, delta, epsilon and zeta subunits.

Its subcellular location is the cytoplasm. It localises to the golgi apparatus membrane. The protein resides in the cytoplasmic vesicle. It is found in the COPI-coated vesicle membrane. In terms of biological role, the coatomer is a cytosolic protein complex that binds to dilysine motifs and reversibly associates with Golgi non-clathrin-coated vesicles, which further mediate biosynthetic protein transport from the ER, via the Golgi up to the trans Golgi network. Coatomer complex is required for budding from Golgi membranes, and is essential for the retrograde Golgi-to-ER transport of dilysine-tagged proteins. In mammals, the coatomer can only be recruited by membranes associated to ADP-ribosylation factors (ARFs), which are small GTP-binding proteins; the complex also influences the Golgi structural integrity, as well as the processing, activity, and endocytic recycling of LDL receptors. The sequence is that of Coatomer subunit delta (ARCN1) from Pongo abelii (Sumatran orangutan).